We begin with the raw amino-acid sequence, 61 residues long: Large ribosomal subunit protein uL30 (61 aa).

It belongs to the universal ribosomal protein uL30 family. As to quaternary structure, part of the 50S ribosomal subunit.

The protein is Large ribosomal subunit protein uL30 of Lactobacillus acidophilus (strain ATCC 700396 / NCK56 / N2 / NCFM).